Here is a 605-residue protein sequence, read N- to C-terminus: Branchpoint-bridging protein (605 aa).

2 disordered regions span residues 1–75 (MSST…GENK) and 117–139 (VPPE…KRTN). The KH domain maps to 184 to 264 (YIPVNEYPDI…EKIARAVQLV (81 aa)). The segment at 294-319 (GTLRDDENYGGAPQSSSGDEMDDRNK) is disordered. The segment at 328–345 (IVCHICGSKGHFARDCLE) adopts a CCHC-type zinc-finger fold. The segment covering 376-392 (ASQQQSIAQNPNTNNVS) has biased composition (polar residues). The disordered stretch occupies residues 376–605 (ASQQQSIAQN…PPPGVIGPPK (230 aa)). Over residues 411 to 424 (PMSERGGSFDRFDR) the composition is skewed to basic and acidic residues. Residues 428-445 (NQSNQREPQQQSHQQNMH) are compositionally biased toward polar residues. Residues 446 to 466 (NTNGNNYDRYDRNFNNSSNSS) are compositionally biased toward low complexity. A compositionally biased stretch (pro residues) spans 468–484 (ELPPWHRPTPPSQPAAP). Residues 499–510 (SVQQSMQQSPWN) show a composition bias toward polar residues. 2 stretches are compositionally biased toward pro residues: residues 561–581 (SVPP…PPGV) and 591–605 (RHPP…GPPK).

This sequence belongs to the BBP/SF1 family.

Its subcellular location is the nucleus. Necessary for the splicing of pre-mRNA. Has a role in the recognition of the branch site (5'-UACUAAC-3'), the pyrimidine tract and the 3'-splice site at the 3'-end of introns. In Yarrowia lipolytica (strain CLIB 122 / E 150) (Yeast), this protein is Branchpoint-bridging protein (BBP).